A 206-amino-acid chain; its full sequence is Sclerostin domain-containing protein 1 (206 aa).

The N-terminal stretch at Met-1–Ala-23 is a signal peptide. Asn-47 carries N-linked (GlcNAc...) asparagine glycosylation. 4 disulfides stabilise this stretch: Cys-75–Cys-133, Cys-89–Cys-147, Cys-100–Cys-163, and Cys-104–Cys-165. Residues Cys-75–Arg-170 form the CTCK domain. Asn-173 carries N-linked (GlcNAc...) asparagine glycosylation. The segment at Ser-176–Ser-206 is disordered. Residues Val-188–Ser-206 are compositionally biased toward basic residues.

It belongs to the sclerostin family. In terms of assembly, interacts with BMP2, BMP4, BMP6 and BMP7 with high affinity.

It is found in the secreted. Directly antagonizes activity of BMP2, BMP4, BMP6 and BMP7 in a dose-dependent manner. Enhances Wnt signaling and inhibits TGF-beta signaling. May be involved in the onset of endometrial receptivity for implantation/sensitization for the decidual cell reaction. This chain is Sclerostin domain-containing protein 1 (SOSTDC1), found in Pongo abelii (Sumatran orangutan).